The chain runs to 74 residues: Guanine nucleotide-binding protein G(T) subunit gamma-T1 (74 aa).

Cysteine methyl ester is present on C71. C71 carries the S-farnesyl cysteine lipid modification. Positions 72 to 74 (VIS) are cleaved as a propeptide — removed in mature form.

Belongs to the G protein gamma family. G proteins are composed of 3 units, alpha, beta and gamma. Retinal rod outer segment.

The protein localises to the cell membrane. Guanine nucleotide-binding proteins (G proteins) are involved as a modulator or transducer in various transmembrane signaling systems. The beta and gamma chains are required for the GTPase activity, for replacement of GDP by GTP, and for G protein-effector interaction. This is Guanine nucleotide-binding protein G(T) subunit gamma-T1 (GNGT1) from Canis lupus familiaris (Dog).